The following is a 351-amino-acid chain: MKAVTVIPLVKDSLALRDMPKPSPKRYQVLLSPIEVGVCGTDKDIIEGRYGAPPPGEEYLILGHESVAEVVELGDDVDNVSVGDIVVPTVRRPTTCTLPITEVDYCPRGTYAEHGIWYLHGFATEFAVTDSQYLVKVPKEAIDVAVLTEPLSIVEKGIDLALRLGKARFESWSPRRVLIMGAGPIGMLALMVMRLRDFADITVTATRPYDSLKAKLVREIGATYVNTNIDQINGDFDIVIEATGSTSAAYDALRHLGADGVAVLLGIYLDSKNVNIRPLLDDWRRNKLIIGATNASIGAFEMGVADLVKAKFEFGGWVRKLITKEVTLDEYEYAYNWGHEDIKSVIQIRSL.

C39 lines the Zn(2+) pocket. Position 41 (T41) interacts with substrate. Zn(2+) contacts are provided by H64 and E65. Positions 113 and 149 each coordinate substrate. E149 is a binding site for Zn(2+). NADP(+) is bound by residues 182 to 185 (AGPI), 265 to 267 (LGI), and 292 to 294 (ATN). N294 lines the substrate pocket.

Belongs to the zinc-containing alcohol dehydrogenase family. Glucose 1-dehydrogenase subfamily. Requires Zn(2+) as cofactor.

It catalyses the reaction D-glucose + NAD(+) = D-glucono-1,5-lactone + NADH + H(+). The catalysed reaction is D-glucose + NADP(+) = D-glucono-1,5-lactone + NADPH + H(+). Its function is as follows. Catalyzes the NAD(P)(+)-dependent oxidation of D-glucose to D-gluconate via gluconolactone. Can utilize both NAD(+) and NADP(+) as electron acceptor. Is involved in the degradation of glucose through a non-phosphorylative variant of the Entner-Doudoroff pathway. In Vulcanisaeta moutnovskia (strain 768-28), this protein is Glucose 1-dehydrogenase 1.